The primary structure comprises 231 residues: Probable septum site-determining protein MinC (231 aa).

Residues 102-125 (KEKAPRPAPAPQAPAQNTTPVTKT) form a disordered region.

Belongs to the MinC family. Interacts with MinD and FtsZ.

Functionally, cell division inhibitor that blocks the formation of polar Z ring septums. Rapidly oscillates between the poles of the cell to destabilize FtsZ filaments that have formed before they mature into polar Z rings. Prevents FtsZ polymerization. This Escherichia coli O139:H28 (strain E24377A / ETEC) protein is Probable septum site-determining protein MinC.